Here is an 81-residue protein sequence, read N- to C-terminus: Small ribosomal subunit protein eS21 (81 aa).

Belongs to the eukaryotic ribosomal protein eS21 family.

This chain is Small ribosomal subunit protein eS21 (RPS21), found in Zea mays (Maize).